A 376-amino-acid chain; its full sequence is Na(+)/H(+) antiporter NhaA (376 aa).

The next 11 membrane-spanning stretches (helical) occupy residues 8–28, 49–69, 87–107, 117–137, 140–160, 162–182, 209–229, 248–268, 270–290, 321–341, and 349–369; these read FLAT…AAML, LSLL…LVGL, ILPC…YLAF, GWAI…ALLG, APAS…MGAV, IIAL…AIVI, LAVL…ALAI, PWVA…VSFA, IGAE…LFLG, GVAL…GLAF, and EVKI…YALL.

It belongs to the NhaA Na(+)/H(+) (TC 2.A.33) antiporter family.

The protein localises to the cell inner membrane. The catalysed reaction is Na(+)(in) + 2 H(+)(out) = Na(+)(out) + 2 H(+)(in). Its function is as follows. Na(+)/H(+) antiporter that extrudes sodium in exchange for external protons. The polypeptide is Na(+)/H(+) antiporter NhaA (Rhizorhabdus wittichii (strain DSM 6014 / CCUG 31198 / JCM 15750 / NBRC 105917 / EY 4224 / RW1) (Sphingomonas wittichii)).